The primary structure comprises 491 residues: MADLANEEKPAVAPSVFVFQKDKGQKRSAGSSSPEAGEDSDHEDGNYCPPVKRERTSSLTHSEEKSSGFRLKPPTLIHGQAPSAGLPSQKPREQQRGVLRPAVLQAPQPKVLSQTVPSSGTNGVSMPADCTGPATSVSPENLTQRSPSESAEETHTLEEKVPQKTPHGTSEEGHCEEEQAAPQAFVFGQNLRDRVKLMNENASVADVDSAAHPSSETPSATNYFLQYISSSADNATHSADNSTKFVFGQNMSERVLSPPKLNEANSDTSRETTHAQSGSESSSQEAAPKKESLAESAAAYTKATAWTCLLEKVEVITGEEAESNVLQIQCKLFVFDKTSQSWVERGRGLLRLNDMASTDDGTLQSRLVMRTQGSLRLILNTKLWAQMQMDKASEKSIRITATDAEDQGVKVFLISASSKDTGQLYAALHHRILALRSRAEQEQEAKAPPPEPGATRATEEEDSDEDAVLAPSGVTGAGTGDEGDGQAPGST.

The span at 1-10 (MADLANEEKP) shows a compositional bias: basic and acidic residues. Disordered regions lie at residues 1-177 (MADL…HCEE) and 255-292 (VLSPPKLNEANSDTSRETTHAQSGSESSSQEAAPKKES). The residue at position 2 (alanine 2) is an N-acetylalanine. An N6-acetyllysine mark is found at lysine 9 and lysine 21. Phosphoserine occurs at positions 32, 33, and 40. The short motif at 49 to 57 (PPVKRERTS) is the Nuclear localization signal element. The segment covering 51 to 67 (VKRERTSSLTHSEEKSS) has biased composition (basic and acidic residues). At threonine 56 the chain carries Phosphothreonine. Serine 58 is modified (phosphoserine). Composition is skewed to polar residues over residues 111-124 (VLSQTVPSSGTNGV) and 133-149 (PATSVSPENLTQRSPSE). Serine 146 carries the phosphoserine modification. The segment covering 152-162 (EETHTLEEKVP) has biased composition (basic and acidic residues). Phosphoserine is present on residues serine 257, serine 277, serine 279, and serine 296. Residues 275–286 (AQSGSESSSQEA) show a composition bias toward low complexity. The 141-residue stretch at 302 to 442 (KATAWTCLLE…LALRSRAEQE (141 aa)) folds into the RanBD1 domain. Residues 438–491 (RAEQEQEAKAPPPEPGATRATEEEDSDEDAVLAPSGVTGAGTGDEGDGQAPGST) form a disordered region. Serine 463 is modified (phosphoserine).

As to quaternary structure, interacts with CHC1 in a Ran-stimulated manner. Interacts with XPO1. Interacts (via its C-terminal R domain) with SMAD2 (dephosphorylated form via its MH1 and MH2 domains); the interaction results in the nuclear export of SMAD2 and termination of the TGF-beta signaling. Interacts (via its C-terminal R domain) with SMAD3 (dephosphorylated form via its MH1 domain); the interaction results in the nuclear export of SMAD3 and termination of the TGF-beta signaling. Post-translationally, phosphorylation at Ser-58 promotes its import into the nucleus.

Its subcellular location is the cytoplasm. The protein localises to the nucleus. Its function is as follows. Acts as a cofactor for XPO1/CRM1-mediated nuclear export, perhaps as export complex scaffolding protein. Bound to XPO1/CRM1, stabilizes the XPO1/CRM1-cargo interaction. In the absence of Ran-bound GTP prevents binding of XPO1/CRM1 to the nuclear pore complex. Binds to CHC1/RCC1 and increases the guanine nucleotide exchange activity of CHC1/RCC1. Recruits XPO1/CRM1 to CHC1/RCC1 in a Ran-dependent manner. Negative regulator of TGF-beta signaling through interaction with the R-SMAD proteins, SMAD2 and SMAD3, and mediating their nuclear export. The polypeptide is Ran-binding protein 3 (Ranbp3) (Mus musculus (Mouse)).